Reading from the N-terminus, the 412-residue chain is Gamma-glutamyl phosphate reductase (412 aa).

It belongs to the gamma-glutamyl phosphate reductase family.

The protein localises to the cytoplasm. It carries out the reaction L-glutamate 5-semialdehyde + phosphate + NADP(+) = L-glutamyl 5-phosphate + NADPH + H(+). The protein operates within amino-acid biosynthesis; L-proline biosynthesis; L-glutamate 5-semialdehyde from L-glutamate: step 2/2. Functionally, catalyzes the NADPH-dependent reduction of L-glutamate 5-phosphate into L-glutamate 5-semialdehyde and phosphate. The product spontaneously undergoes cyclization to form 1-pyrroline-5-carboxylate. This Actinobacillus pleuropneumoniae serotype 5b (strain L20) protein is Gamma-glutamyl phosphate reductase.